The chain runs to 203 residues: MSNIAHGNPQKRPGYAIDIEASCRKRGKSAPAEDCLNEAKTPLDEIESRVVALQRQIANLNSGTLLQSIKEATARLATSWALVTKHQRYVDGYQELALPDAPTYHVQALKTAQSDLEKASQDAQAADGVLASAQKEQRDFKRVEENLVMLGAERATLDQSVRDLTLDKERCDVYLGMVEYGPDGLATLLEKDVGAWKGMLDLV.

Its pathway is mycotoxin biosynthesis. Its function is as follows. Part of the gene cluster that mediates the biosynthesis of gramillins A and B, bicyclic lipopeptides that induce cell death in maize leaves but not in wheat leaves. The nonribosomal peptide synthetase GRA1 incorporates respectively a glutamic adic (Glu), a leucine (Leu), a serine (Ser), a hydroxyglutamine (HOGln), a 2-amino decanoic acid, and 2 cysteins (CysB and CysA). The biosynthesis of 2-amino decanoic acid incorporated in gramillins could be initiated by a fatty acid synthase composed of the alpha and beta subunits FGSG_00036 and FGSG_11656. The cytochrome P450 monooxygenase FGSG_15680 could hydroxylate the fatty acid chain. Subsequent oxidation to the ketone by the oxidoreductase FGSG_00048 and transamination by aminotransferase FGSG_00049 could form 2-amino-decanoic acid. On the other hand, FGSG_15680 could also be responsible for the HO-modified glutamine at the gamma-position. Whether hydroxylation occurs on the fully assembled product or on the Gln residue prior to assembly into the gramillins requires further proof. The thioredoxin FGSG_00043 could also be required for the disulfide-bond formation between CysA and CysB. The specific involvement of the remaining proteins from the cluster is more difficult to discern, but could have broader regulatory (FGSG_00040 and FGSG_11657) or enzymatic functions (FGSG_00044 and FGSG_00045). The final C-domain of GRA1 does not possess the expected sequence of a termination CT domain, often implicated in macrocyclization and release of a cyclopeptidein fungal NRPs; and the thioesterase FGSG_00047 may act in concert with the terminal C-domain of GRA1 to catalyze the formation of the macrocyclic anhydride and release of the products. The chain is Gramillins biosynthetic cluster protein FGSG_00038 from Gibberella zeae (strain ATCC MYA-4620 / CBS 123657 / FGSC 9075 / NRRL 31084 / PH-1) (Wheat head blight fungus).